A 268-amino-acid polypeptide reads, in one-letter code: Tryptophan synthase alpha chain (268 aa).

Residues glutamate 49 and aspartate 60 each act as proton acceptor in the active site.

The protein belongs to the TrpA family. In terms of assembly, tetramer of two alpha and two beta chains.

It catalyses the reaction (1S,2R)-1-C-(indol-3-yl)glycerol 3-phosphate + L-serine = D-glyceraldehyde 3-phosphate + L-tryptophan + H2O. The protein operates within amino-acid biosynthesis; L-tryptophan biosynthesis; L-tryptophan from chorismate: step 5/5. Its function is as follows. The alpha subunit is responsible for the aldol cleavage of indoleglycerol phosphate to indole and glyceraldehyde 3-phosphate. The protein is Tryptophan synthase alpha chain of Haemophilus influenzae (strain PittEE).